Consider the following 1624-residue polypeptide: NAD-specific glutamate dehydrogenase (1624 aa).

Residue Lys845 is part of the active site.

The protein belongs to the Glu/Leu/Phe/Val dehydrogenases family. In terms of assembly, interacts with (unphosphorylated) GarA.

The enzyme catalyses L-glutamate + NAD(+) + H2O = 2-oxoglutarate + NH4(+) + NADH + H(+). Activity is inhibited by unphosphorylated GarA. Catalyzes the reversible conversion of L-glutamate to 2-oxoglutarate. This is NAD-specific glutamate dehydrogenase (gdh) from Mycobacterium tuberculosis (strain ATCC 25618 / H37Rv).